Reading from the N-terminus, the 416-residue chain is MAYFLEQTDSEIFELIFEEYKRQNEHLEMIASENYTFPSVMEAMGSILTNKYAEGYPNKRYYGGCEVVDKIESLAIERAKKLFNCQFANVQAHSGSQANNAVYHALLKPYDKILGMDLSCGGHLTHGAKVSLTGKHYQSFSYGVNLDGYIDYEEALKIAQSVKPEIIVCGFSAYPREIDFKKFREIADEVGALLLGDIAHVAGLVVTNEHAHPFPHCHVVSSTTHKTLRGPRGGIILTNDEEIAAKIDKAIFPGTQGGPLMHVIAAKAVGFKENLKPEFKAYAKLVKSNMQVLAKALKEKNHKLVSGGTSNHLLLMDFLDKPYSGKDADIALGNAGITVNKNTIPGETRSPFVTSGIRIGSAALSARGMGAKEFEIIGNKISDILNDINNVSLQLHVKEELKAMANQFPVYQQPIF.

(6S)-5,6,7,8-tetrahydrofolate-binding positions include Leu-118 and 122–124 (GHL). An N6-(pyridoxal phosphate)lysine modification is found at Lys-226. Residues Glu-242 and 350–352 (SPF) each bind (6S)-5,6,7,8-tetrahydrofolate.

It belongs to the SHMT family. Homodimer. Pyridoxal 5'-phosphate serves as cofactor.

The protein resides in the cytoplasm. It catalyses the reaction (6R)-5,10-methylene-5,6,7,8-tetrahydrofolate + glycine + H2O = (6S)-5,6,7,8-tetrahydrofolate + L-serine. It functions in the pathway one-carbon metabolism; tetrahydrofolate interconversion. The protein operates within amino-acid biosynthesis; glycine biosynthesis; glycine from L-serine: step 1/1. In terms of biological role, catalyzes the reversible interconversion of serine and glycine with tetrahydrofolate (THF) serving as the one-carbon carrier. This reaction serves as the major source of one-carbon groups required for the biosynthesis of purines, thymidylate, methionine, and other important biomolecules. Also exhibits THF-independent aldolase activity toward beta-hydroxyamino acids, producing glycine and aldehydes, via a retro-aldol mechanism. The sequence is that of Serine hydroxymethyltransferase from Helicobacter pylori (strain G27).